A 311-amino-acid polypeptide reads, in one-letter code: MKREDLLTNVVDDLSLEDLRDLKNLEIIFDKVYGFSAENVVKAVEILRDLIKEADLRFLSFTANLVSTGLRGLLADLIRREYFNVVITTGGTIDHDIARSFGGKYYKGSFEFDDTMLKELEIHRLGNIFIPFENYGKVIEEVVRKYIPEIVSVRKDWSVYELLWEFGKRINDQHSILKACYEKKVPLIVPGVVDGSFGTNLFIVSQFNGLKIDLFQDMRLIKDLIFSSEKSGALIIGGGISKHHTIWWNQFKDGLDYAIYITTAQEYDGSLSGARPREAISWNKVRPSARSVTIYADATIILPILSASLLR.

Lys-284 acts as the Nucleophile in catalysis.

Belongs to the deoxyhypusine synthase family. The cofactor is NAD(+).

The enzyme catalyses [eIF5A protein]-L-lysine + spermidine = [eIF5A protein]-deoxyhypusine + propane-1,3-diamine. It functions in the pathway protein modification; eIF5A hypusination. In terms of biological role, catalyzes the NAD-dependent oxidative cleavage of spermidine and the subsequent transfer of the butylamine moiety of spermidine to the epsilon-amino group of a specific lysine residue of the eIF-5A precursor protein to form the intermediate deoxyhypusine residue. The polypeptide is Probable deoxyhypusine synthase (Sulfolobus acidocaldarius (strain ATCC 33909 / DSM 639 / JCM 8929 / NBRC 15157 / NCIMB 11770)).